Reading from the N-terminus, the 418-residue chain is Queuine tRNA-ribosyltransferase accessory subunit 2 (418 aa).

The Zn(2+) site is built by cysteine 325, cysteine 327, cysteine 330, and histidine 356.

This sequence belongs to the queuine tRNA-ribosyltransferase family. QTRT2 subfamily. In terms of assembly, heterodimer of a catalytic subunit and an accessory subunit. Zn(2+) is required as a cofactor.

The protein localises to the cytoplasm. Functionally, non-catalytic subunit of the queuine tRNA-ribosyltransferase (TGT) that catalyzes the base-exchange of a guanine (G) residue with queuine (Q) at position 34 (anticodon wobble position) in tRNAs with GU(N) anticodons (tRNA-Asp, -Asn, -His and -Tyr), resulting in the hypermodified nucleoside queuosine (7-(((4,5-cis-dihydroxy-2-cyclopenten-1-yl)amino)methyl)-7-deazaguanosine). The polypeptide is Queuine tRNA-ribosyltransferase accessory subunit 2 (Drosophila erecta (Fruit fly)).